The sequence spans 110 residues: UPF0060 membrane protein Veis_0342 (110 aa).

Transmembrane regions (helical) follow at residues 8–28 (VLFT…WLVI), 33–53 (PLWL…LLTL), 63–83 (AAYG…VDGV), and 90–110 (VAGA…PASA).

Belongs to the UPF0060 family.

Its subcellular location is the cell inner membrane. The protein is UPF0060 membrane protein Veis_0342 of Verminephrobacter eiseniae (strain EF01-2).